The sequence spans 444 residues: Homogentisate 1,2-dioxygenase (444 aa).

The Proton acceptor role is filled by histidine 298. Residues histidine 341 and glutamate 347 each contribute to the Fe cation site. 2 residues coordinate homogentisate: tyrosine 356 and histidine 377. Histidine 377 is a binding site for Fe cation.

The protein belongs to the homogentisate dioxygenase family. As to quaternary structure, hexamer; dimer of trimers. Requires Fe cation as cofactor.

It catalyses the reaction homogentisate + O2 = 4-maleylacetoacetate + H(+). Its pathway is amino-acid degradation; L-phenylalanine degradation; acetoacetate and fumarate from L-phenylalanine: step 4/6. Functionally, involved in the catabolism of homogentisate (2,5-dihydroxyphenylacetate or 2,5-OH-PhAc), a central intermediate in the degradation of phenylalanine and tyrosine. Catalyzes the oxidative ring cleavage of the aromatic ring of homogentisate to yield maleylacetoacetate. In Burkholderia lata (strain ATCC 17760 / DSM 23089 / LMG 22485 / NCIMB 9086 / R18194 / 383), this protein is Homogentisate 1,2-dioxygenase.